The following is a 356-amino-acid chain: MRRELLLEKIETYKAIMPWYVLDYYQSKLAVPYSFTTLYEYLKEYKRFFDWLMDADLTQAPKIADIDLSTLEHLTKNDLEAFVLYLRERPSLNTYSTKEGLSQTTINRTLSALSSLYKYLTEEVENDQGEPYFYRNVMKKVSTKKKKETLASRAENIKQKLFLGDETLAFLDYVDKEYEQKLSNRAKSSFRKNKERDLAIISLLLASGVRLSEAVNLDLKDVNLNMMIIEVIRKGGKRDSVNVAGFAKGYLESYLAVRQRRYKAEKQDLAFFLTEYRGVPNRMDASSIEKMVGKYSEDFKIRVTPHKLRHTLATRLYDATKSQVLVSHQLGHSSTQVTDLYTHIVNDEQKNALDNL.

The 106-residue stretch at 16–121 folds into the Core-binding (CB) domain; sequence IMPWYVLDYY…ALSSLYKYLT (106 aa). Residues 169–354 form the Tyr recombinase domain; sequence AFLDYVDKEY…VNDEQKNALD (186 aa). Active-site residues include Arg-210, Lys-234, His-306, Arg-309, and His-332. Tyr-341 functions as the O-(3'-phospho-DNA)-tyrosine intermediate in the catalytic mechanism.

The protein belongs to the 'phage' integrase family. XerS subfamily.

The protein localises to the cytoplasm. Its activity is regulated as follows. FtsK is required for recombination. Its function is as follows. Site-specific tyrosine recombinase, which acts by catalyzing the cutting and rejoining of the recombining DNA molecules. Essential to convert dimers of the bacterial chromosome into monomers to permit their segregation at cell division. The protein is Tyrosine recombinase XerS of Streptococcus pyogenes serotype M5 (strain Manfredo).